The sequence spans 247 residues: Aliphatic sulfonates import ATP-binding protein SsuB 3 (247 aa).

An ABC transporter domain is found at 28 to 242 (VSVRGLQRRY…ALRSILLEEL (215 aa)). 60 to 67 (GESGCGKT) serves as a coordination point for ATP.

The protein belongs to the ABC transporter superfamily. Aliphatic sulfonates importer (TC 3.A.1.17.2) family. As to quaternary structure, the complex is composed of two ATP-binding proteins (SsuB), two transmembrane proteins (SsuC) and a solute-binding protein (SsuA).

It is found in the cell inner membrane. The enzyme catalyses ATP + H2O + aliphatic sulfonate-[sulfonate-binding protein]Side 1 = ADP + phosphate + aliphatic sulfonateSide 2 + [sulfonate-binding protein]Side 1.. Functionally, part of the ABC transporter complex SsuABC involved in aliphatic sulfonates import. Responsible for energy coupling to the transport system. The chain is Aliphatic sulfonates import ATP-binding protein SsuB 3 from Paraburkholderia xenovorans (strain LB400).